The sequence spans 177 residues: Peptide methionine sulfoxide reductase MsrA (177 aa).

Residue Cys15 is part of the active site.

This sequence belongs to the MsrA Met sulfoxide reductase family.

It carries out the reaction L-methionyl-[protein] + [thioredoxin]-disulfide + H2O = L-methionyl-(S)-S-oxide-[protein] + [thioredoxin]-dithiol. The enzyme catalyses [thioredoxin]-disulfide + L-methionine + H2O = L-methionine (S)-S-oxide + [thioredoxin]-dithiol. Functionally, has an important function as a repair enzyme for proteins that have been inactivated by oxidation. Catalyzes the reversible oxidation-reduction of methionine sulfoxide in proteins to methionine. The chain is Peptide methionine sulfoxide reductase MsrA from Listeria innocua serovar 6a (strain ATCC BAA-680 / CLIP 11262).